The primary structure comprises 115 residues: Large ribosomal subunit protein bL19 (115 aa).

Belongs to the bacterial ribosomal protein bL19 family.

Functionally, this protein is located at the 30S-50S ribosomal subunit interface and may play a role in the structure and function of the aminoacyl-tRNA binding site. This Enterobacter sp. (strain 638) protein is Large ribosomal subunit protein bL19.